We begin with the raw amino-acid sequence, 345 residues long: uncharacterized protein (345 aa).

The 198-residue stretch at 1–198 (MDVLSAVLLA…LSEGLLDHEE (198 aa)) folds into the CNNM transmembrane domain. Helical transmembrane passes span 3 to 23 (VLSA…FVGA) and 95 to 115 (VPPA…HVLL). CBS domains lie at 217–280 (AVPL…PQTV) and 285–342 (VVRP…MRDG). The chain crosses the membrane as a helical span at residues 312–332 (LALVTADNGSVVGMVALEDVV).

Belongs to the TerC family.

It localises to the cell membrane. This is an uncharacterized protein from Mycobacterium tuberculosis (strain ATCC 25618 / H37Rv).